A 274-amino-acid polypeptide reads, in one-letter code: Triosephosphate isomerase (274 aa).

Substrate is bound at residue 13 to 15 (NWK). His98 acts as the Electrophile in catalysis. Catalysis depends on Glu170, which acts as the Proton acceptor. Gly176 and Ser216 together coordinate substrate.

The protein belongs to the triosephosphate isomerase family. In terms of assembly, homodimer.

Its subcellular location is the cytoplasm. It catalyses the reaction D-glyceraldehyde 3-phosphate = dihydroxyacetone phosphate. It functions in the pathway carbohydrate biosynthesis; gluconeogenesis. Its pathway is carbohydrate degradation; glycolysis; D-glyceraldehyde 3-phosphate from glycerone phosphate: step 1/1. In terms of biological role, involved in the gluconeogenesis. Catalyzes stereospecifically the conversion of dihydroxyacetone phosphate (DHAP) to D-glyceraldehyde-3-phosphate (G3P). The protein is Triosephosphate isomerase of Aster yellows witches'-broom phytoplasma (strain AYWB).